Reading from the N-terminus, the 548-residue chain is ATP synthase subunit alpha, mitochondrial (548 aa).

209 to 216 (GDRQTGKT) serves as a coordination point for ATP.

It belongs to the ATPase alpha/beta chains family. As to quaternary structure, F-type ATPases have 2 components, CF(1) - the catalytic core - and CF(0) - the membrane proton channel. CF(1) has five subunits: alpha(3), beta(3), gamma(1), delta(1), epsilon(1). CF(0) has three main subunits: a, b and c.

The protein localises to the mitochondrion. Its subcellular location is the mitochondrion inner membrane. Mitochondrial membrane ATP synthase (F(1)F(0) ATP synthase or Complex V) produces ATP from ADP in the presence of a proton gradient across the membrane which is generated by electron transport complexes of the respiratory chain. F-type ATPases consist of two structural domains, F(1) - containing the extramembraneous catalytic core, and F(0) - containing the membrane proton channel, linked together by a central stalk and a peripheral stalk. During catalysis, ATP synthesis in the catalytic domain of F(1) is coupled via a rotary mechanism of the central stalk subunits to proton translocation. Subunits alpha and beta form the catalytic core in F(1). Rotation of the central stalk against the surrounding alpha(3)beta(3) subunits leads to hydrolysis of ATP in three separate catalytic sites on the beta subunits. Subunit alpha does not bear the catalytic high-affinity ATP-binding sites. The protein is ATP synthase subunit alpha, mitochondrial (ATP1) of Kluyveromyces lactis (strain ATCC 8585 / CBS 2359 / DSM 70799 / NBRC 1267 / NRRL Y-1140 / WM37) (Yeast).